The following is a 335-amino-acid chain: MKFVDSAKISVKAGDGGRGCVSFRREKFVPKGGPDGGDGGRGGHVYLRANKQLTTLLDFKYRKSYIAGRGGHGLGARKSGKDGKDVIIGVPCGTVVRNVETGEVICDMVEDGQEIMIAKGGRGGWGNQHFATATRQAPRFAQPGEPGEEYELEMELKLMADVGLVGFPNAGKSTLISVLSAARPKIADYPFTTLVPNLGIVRYEDYKSFVMADIPGIIEGAAEGRGLGIQFLRHIERTKTLLIMVPSNTEDIAAEYATLLKELEKFDPSLLSKPRLVVITKMDIAPEDFTMPELEKGVKVLAISSVAGQGLKALKDELWRQVSLQNQSPSEHAGS.

The region spanning 1 to 159 (MKFVDSAKIS…YELEMELKLM (159 aa)) is the Obg domain. Positions 160-323 (ADVGLVGFPN…LKDELWRQVS (164 aa)) constitute an OBG-type G domain. Residues 166–173 (GFPNAGKS), 191–195 (FTTLV), 213–216 (DIPG), 280–283 (TKMD), and 304–306 (SSV) contribute to the GTP site. Mg(2+) is bound by residues serine 173 and threonine 193.

The protein belongs to the TRAFAC class OBG-HflX-like GTPase superfamily. OBG GTPase family. Monomer. Mg(2+) is required as a cofactor.

The protein resides in the cytoplasm. Its function is as follows. An essential GTPase which binds GTP, GDP and possibly (p)ppGpp with moderate affinity, with high nucleotide exchange rates and a fairly low GTP hydrolysis rate. Plays a role in control of the cell cycle, stress response, ribosome biogenesis and in those bacteria that undergo differentiation, in morphogenesis control. The protein is GTPase Obg of Chlorobaculum tepidum (strain ATCC 49652 / DSM 12025 / NBRC 103806 / TLS) (Chlorobium tepidum).